A 93-amino-acid polypeptide reads, in one-letter code: Small ribosomal subunit protein uS19 (93 aa).

The protein belongs to the universal ribosomal protein uS19 family.

In terms of biological role, protein S19 forms a complex with S13 that binds strongly to the 16S ribosomal RNA. In Ligilactobacillus salivarius (strain UCC118) (Lactobacillus salivarius), this protein is Small ribosomal subunit protein uS19.